The chain runs to 57 residues: Potassium channel toxin alpha-KTx 8.2 (57 aa).

The signal sequence occupies residues 1 to 28 (MSRLYAIILIALVFNVVMTITPDMKVEA). 3 disulfides stabilise this stretch: cysteine 31/cysteine 47, cysteine 34/cysteine 52, and cysteine 38/cysteine 54.

This sequence belongs to the short scorpion toxin superfamily. Potassium channel inhibitor family. Alpha-KTx 08 subfamily. In terms of tissue distribution, expressed by the venom gland.

Its subcellular location is the secreted. Functionally, this toxin inhibits rKv1.1/KCNA1 (100% inhibition at 3 uM), Kv1.3/KCNA3 (human, mouse and rat) (IC(50)=269-467 nM), shaker IR (60% at 3 uM) and activates the mouse capsaicin receptor TRPV1 (EC(50)=132 uM, at 20 degrees Celsius), a non-selective cation channel expressed by sensory neurons of the pain pathway. In vivo, intraplantar injection of this toxin in WT mice hind paw shows significant acute pain, whereas no pain is observed when the toxin is injected into TRPV1 KO mice. In addition, subcutaneous injection into mice (185 mg) produces an excitation of the animal, but no lethality, whereas injection into cockroaches does not provoke lethality as well. In Olivierus martensii (Manchurian scorpion), this protein is Potassium channel toxin alpha-KTx 8.2.